A 337-amino-acid polypeptide reads, in one-letter code: Phosphate acyltransferase (337 aa).

This sequence belongs to the PlsX family. Homodimer. Probably interacts with PlsY.

It is found in the cytoplasm. The catalysed reaction is a fatty acyl-[ACP] + phosphate = an acyl phosphate + holo-[ACP]. Its pathway is lipid metabolism; phospholipid metabolism. Its function is as follows. Catalyzes the reversible formation of acyl-phosphate (acyl-PO(4)) from acyl-[acyl-carrier-protein] (acyl-ACP). This enzyme utilizes acyl-ACP as fatty acyl donor, but not acyl-CoA. This is Phosphate acyltransferase from Polynucleobacter necessarius subsp. necessarius (strain STIR1).